The primary structure comprises 734 residues: Elongation factor 2 (734 aa).

In terms of domain architecture, tr-type G spans 18–259 (EQIRNIGITA…MVVKYVPNPR (242 aa)). Residues 27-34 (AHVDHGKT), 93-97 (DTPGH), and 147-150 (NKID) contribute to the GTP site. Diphthamide is present on H600.

The protein belongs to the TRAFAC class translation factor GTPase superfamily. Classic translation factor GTPase family. EF-G/EF-2 subfamily.

It is found in the cytoplasm. In terms of biological role, catalyzes the GTP-dependent ribosomal translocation step during translation elongation. During this step, the ribosome changes from the pre-translocational (PRE) to the post-translocational (POST) state as the newly formed A-site-bound peptidyl-tRNA and P-site-bound deacylated tRNA move to the P and E sites, respectively. Catalyzes the coordinated movement of the two tRNA molecules, the mRNA and conformational changes in the ribosome. This chain is Elongation factor 2 (fusA), found in Desulfurococcus mucosus (Desulfurococcus mobilis).